The primary structure comprises 448 residues: Chromogranin-A (448 aa).

A signal peptide spans 1-18 (MRSAVVLALLLCAGQVIA). The cysteines at positions 35 and 56 are disulfide-linked. Residues 116 to 251 (LKEVTEEALS…AFNPHPSLSY (136 aa)) form a disordered region. Composition is skewed to basic and acidic residues over residues 129–139 (AEARGDSKEVE) and 158–175 (QESR…KEAI). At Ser197 the chain carries Phosphoserine. The segment covering 205-222 (VDREKGLGAERGQQAKRE) has biased composition (basic and acidic residues). The span at 223–238 (EEEDEAGEKADAEEEG) shows a compositional bias: acidic residues. Phosphoserine occurs at positions 258 and 288. Residues 263-429 (LVVDGARKTG…PEDQELESLS (167 aa)) form a disordered region. At Gly308 the chain carries Glycine amide. The segment covering 310-350 (KSRELEQEKEQERLSKEWEDAKRWSKMDQLAKELTAEKRLE) has biased composition (basic and acidic residues). A phosphoserine mark is found at Ser311, Ser324, and Ser362. Methionine sulfoxide is present on Met363. Ser389, Ser393, Ser415, and Ser429 each carry phosphoserine. Basic and acidic residues predominate over residues 405–422 (YPEEKKEEEGSANRRPED). O-linked (Xyl...) (chondroitin sulfate) serine glycosylation is present at Ser415.

The protein belongs to the chromogranin/secretogranin protein family. As to quaternary structure, self-interacts; self-assembly is promoted in vitro by chondroitin sulfate attachment which occurs at mildly acidic pH conditions. Interacts with SCG3. Interacts with ITPR1 in the secretory granules. In terms of processing, O-glycosylated; contains chondroitin sulfate (CS). CS attachment is pH-dependent, being observed at mildly acidic conditions of pH 5 but not at neutral pH, and promotes self-assembly in vitro. In terms of tissue distribution, highly expressed in adrenal medulla and pituitary gland. Weaker expression detected in cerebrum, cerebellum, spinal cord, liver, thyroid gland, striated muscle, lung, spleen, kidney, parotid gland, and sublingual gland.

It localises to the secreted. The protein resides in the cytoplasmic vesicle. Its subcellular location is the secretory vesicle. The protein localises to the neuronal dense core vesicle. Functionally, strongly inhibits glucose induced insulin release from the pancreas. Inhibits catecholamine release from chromaffin cells and noradrenergic neurons by acting as a non-competitive nicotinic cholinergic antagonist. Can induce mast cell migration, degranulation and production of cytokines and chemokines. In terms of biological role, regulates granule biogenesis in endocrine cells by up-regulating the transcription of protease nexin 1 (SERPINE2) via a cAMP-PKA-SP1 pathway. This leads to inhibition of granule protein degradation in the Golgi complex which in turn promotes granule formation. This is Chromogranin-A (CHGA) from Equus caballus (Horse).